A 120-amino-acid polypeptide reads, in one-letter code: Large ribosomal subunit protein bL21 (120 aa).

Belongs to the bacterial ribosomal protein bL21 family. As to quaternary structure, part of the 50S ribosomal subunit. Contacts protein L20.

Functionally, this protein binds to 23S rRNA in the presence of protein L20. The polypeptide is Large ribosomal subunit protein bL21 (Rhizorhabdus wittichii (strain DSM 6014 / CCUG 31198 / JCM 15750 / NBRC 105917 / EY 4224 / RW1) (Sphingomonas wittichii)).